The sequence spans 117 residues: Large ribosomal subunit protein bL19 (117 aa).

The protein belongs to the bacterial ribosomal protein bL19 family.

Its function is as follows. This protein is located at the 30S-50S ribosomal subunit interface and may play a role in the structure and function of the aminoacyl-tRNA binding site. This Vibrio parahaemolyticus serotype O3:K6 (strain RIMD 2210633) protein is Large ribosomal subunit protein bL19.